We begin with the raw amino-acid sequence, 385 residues long: MSTENLPQSPEQPPRKPRVAVVFGGRSSEHGISVVTAGAVLRAIDRTKYDVLPIGITRDGRWALTADEPERMAITDRRTPSVEELAESNEGGVILPVDPANREVVYSEPGSVPKALGEVDVVFPVLHGPYGEDGTLQGLLELSGVPYVGAGVLASAVGQDKEYMKRVFTSFGLKVGPYVVIRPREWERDESAARRKIVDFAGEHGWPLFVKPARAGSSIGITKVDDLAGLDEAVAEAQRHDPKIIVEALLRGREIECGVLEFEDGPRASVPAEIPPAQSHAYYDFEAKYIDSTPGIVPAPLTPEETAEVRRLAVEAFEATSCEGLVRADFFLTEDGDFVINEINTMPGFTPISMYPQMWQASGIAYPELVDRLVEAALRRSTGLR.

One can recognise an ATP-grasp domain in the interval 165–375 (KRVFTSFGLK…YPELVDRLVE (211 aa)). 201 to 256 (AGEHGWPLFVKPARAGSSIGITKVDDLAGLDEAVAEAQRHDPKIIVEALLRGREIE) contacts ATP. Mg(2+)-binding residues include aspartate 329, glutamate 342, and asparagine 344.

This sequence belongs to the D-alanine--D-alanine ligase family. Mg(2+) is required as a cofactor. It depends on Mn(2+) as a cofactor.

The protein resides in the cytoplasm. The enzyme catalyses 2 D-alanine + ATP = D-alanyl-D-alanine + ADP + phosphate + H(+). It functions in the pathway cell wall biogenesis; peptidoglycan biosynthesis. Cell wall formation. In Streptomyces avermitilis (strain ATCC 31267 / DSM 46492 / JCM 5070 / NBRC 14893 / NCIMB 12804 / NRRL 8165 / MA-4680), this protein is D-alanine--D-alanine ligase.